The sequence spans 237 residues: uncharacterized protein (237 aa).

This is an uncharacterized protein from Methanocaldococcus jannaschii (strain ATCC 43067 / DSM 2661 / JAL-1 / JCM 10045 / NBRC 100440) (Methanococcus jannaschii).